A 442-amino-acid chain; its full sequence is Histidine--tRNA ligase (442 aa).

Positions 416-442 (SGDETTVPVEEFPPEGGEELPTYEDYE) are disordered. A compositionally biased stretch (acidic residues) spans 427–442 (FPPEGGEELPTYEDYE).

It belongs to the class-II aminoacyl-tRNA synthetase family.

It localises to the cytoplasm. It catalyses the reaction tRNA(His) + L-histidine + ATP = L-histidyl-tRNA(His) + AMP + diphosphate + H(+). The chain is Histidine--tRNA ligase from Halorubrum lacusprofundi (strain ATCC 49239 / DSM 5036 / JCM 8891 / ACAM 34).